Consider the following 154-residue polypeptide: Deoxyuridine 5'-triphosphate nucleotidohydrolase (154 aa).

Substrate-binding positions include 72–74 (RSG), N85, 89–91 (LID), and M99.

This sequence belongs to the dUTPase family. Requires Mg(2+) as cofactor.

It catalyses the reaction dUTP + H2O = dUMP + diphosphate + H(+). It participates in pyrimidine metabolism; dUMP biosynthesis; dUMP from dCTP (dUTP route): step 2/2. This enzyme is involved in nucleotide metabolism: it produces dUMP, the immediate precursor of thymidine nucleotides and it decreases the intracellular concentration of dUTP so that uracil cannot be incorporated into DNA. This chain is Deoxyuridine 5'-triphosphate nucleotidohydrolase, found in Psychrobacter arcticus (strain DSM 17307 / VKM B-2377 / 273-4).